The sequence spans 294 residues: N-acetylmuramic acid 6-phosphate etherase (294 aa).

The 164-residue stretch at 54-217 folds into the SIS domain; the sequence is VIKSFEEEGR…STASMIGVGK (164 aa). Catalysis depends on Glu82, which acts as the Proton donor. Glu113 is a catalytic residue.

This sequence belongs to the GCKR-like family. MurNAc-6-P etherase subfamily. As to quaternary structure, homodimer.

The catalysed reaction is N-acetyl-D-muramate 6-phosphate + H2O = N-acetyl-D-glucosamine 6-phosphate + (R)-lactate. It participates in amino-sugar metabolism; N-acetylmuramate degradation. In terms of biological role, specifically catalyzes the cleavage of the D-lactyl ether substituent of MurNAc 6-phosphate, producing GlcNAc 6-phosphate and D-lactate. The polypeptide is N-acetylmuramic acid 6-phosphate etherase (Bacillus cereus (strain ATCC 14579 / DSM 31 / CCUG 7414 / JCM 2152 / NBRC 15305 / NCIMB 9373 / NCTC 2599 / NRRL B-3711)).